Reading from the N-terminus, the 455-residue chain is Golgi pH regulator (455 aa).

5 helical membrane passes run 5 to 25 (IDSS…WLFF), 46 to 66 (VTFA…LGVL), 79 to 99 (LCVI…YFIV), 114 to 134 (CLLW…FPIL), and 150 to 170 (VGVI…VNCP). N-linked (GlcNAc...) asparagine glycosylation is found at Asn180 and Asn243. 4 helical membrane-spanning segments follow: residues 290-310 (GYFF…NIVF), 343-363 (ISFI…LITL), 378-398 (VIVL…VLLI), and 425-445 (WFDV…YLAH).

It belongs to the Golgi pH regulator (TC 1.A.38) family. In terms of assembly, homotrimer. Interacts with RABL3; the interaction stabilizes GPR89A.

The protein localises to the golgi apparatus membrane. It carries out the reaction iodide(out) = iodide(in). The catalysed reaction is chloride(in) = chloride(out). It catalyses the reaction bromide(in) = bromide(out). The enzyme catalyses fluoride(in) = fluoride(out). Its function is as follows. Voltage-gated channel that enables the transfer of monoatomic anions such as iodide, chloride, bromide and fluoride which may function in counter-ion conductance and participates in Golgi acidification. Plays a role in lymphocyte development, probably by acting as a RABL3 effector in hematopoietic cells. The polypeptide is Golgi pH regulator (Bos taurus (Bovine)).